Consider the following 2045-residue polypeptide: Non-reducing polyketide synthase pks27 (2045 aa).

Residues 10–247 (IVFGDLTCDS…LTIPIYAPYH (238 aa)) are N-terminal acylcarrier protein transacylase domain (SAT). The Ketosynthase family 3 (KS3) domain occupies 380–813 (HSKLAIIGYS…GGNSSVLIED (434 aa)). Residues Cys552, His687, and His731 each act as for beta-ketoacyl synthase activity in the active site. A malonyl-CoA:ACP transacylase (MAT) domain region spans residues 913 to 1213 (FAFTGQGSQY…VPTLQRNKDT (301 aa)). An N-terminal hotdog fold region spans residues 1289-1422 (HKLVEEKKDG…ASITFPDAKA (134 aa)). Residues 1289–1599 (HKLVEEKKDG…AQGVPRRLMD (311 aa)) form the PKS/mFAS DH domain. Residue His1321 is the Proton acceptor; for dehydratase activity of the active site. The C-terminal hotdog fold stretch occupies residues 1442–1599 (AARLNTDDRV…AQGVPRRLMD (158 aa)). Asp1511 serves as the catalytic Proton donor; for dehydratase activity. Positions 1612–1636 (APAGGTLNASQSAAANPAADPSAQA) are disordered. The span at 1619 to 1636 (NASQSAAANPAADPSAQA) shows a compositional bias: low complexity. A Carrier domain is found at 1635 to 1712 (QADSDNWQAA…ELEAFWKQGA (78 aa)). Residues 1640 to 1709 (NWQAALKIIS…TIKELEAFWK (70 aa)) form a product template (PT) domain region. Residue Ser1672 is modified to O-(pantetheine 4'-phosphoryl)serine. The disordered stretch occupies residues 1735–1776 (EAEVDQDKNSSDEDRSSLGTSSYEVISPNTTETTPEITKTSS). Over residues 1739–1750 (DQDKNSSDEDRS) the composition is skewed to basic and acidic residues. Residues 1760 to 1776 (ISPNTTETTPEITKTSS) are compositionally biased toward low complexity. Positions 1798-2039 (TLFLLPDGSG…AKRLSEMIEG (242 aa)) are thioesterase.

Requires pantetheine 4'-phosphate as cofactor.

It participates in secondary metabolite biosynthesis. Its function is as follows. Non-reducing polyketide synthase (NRPKS); part of the gene cluster 27 that mediates the biosynthesis of asparasone A, a sclerotium-specific anthraquinone pigment important for sclerotial survival. Catalyzes the formation of the aromatic polyketide from acetyl coenzyme A and seven malonyl coenzyme A molecules. Through its product template (PT) domain, catalyzes the cyclization of polyketide backbone via C6-C11 aldolcondensation. The chain is Non-reducing polyketide synthase pks27 from Aspergillus flavus (strain ATCC 200026 / FGSC A1120 / IAM 13836 / NRRL 3357 / JCM 12722 / SRRC 167).